The chain runs to 712 residues: Ribosomal RNA large subunit methyltransferase K/L (712 aa).

The 112-residue stretch at 42–153 folds into the THUMP domain; the sequence is QALRIVMWSR…KGRASLSIDL (112 aa).

Belongs to the methyltransferase superfamily. RlmKL family.

Its subcellular location is the cytoplasm. It carries out the reaction guanosine(2445) in 23S rRNA + S-adenosyl-L-methionine = N(2)-methylguanosine(2445) in 23S rRNA + S-adenosyl-L-homocysteine + H(+). It catalyses the reaction guanosine(2069) in 23S rRNA + S-adenosyl-L-methionine = N(2)-methylguanosine(2069) in 23S rRNA + S-adenosyl-L-homocysteine + H(+). Its function is as follows. Specifically methylates the guanine in position 2445 (m2G2445) and the guanine in position 2069 (m7G2069) of 23S rRNA. The protein is Ribosomal RNA large subunit methyltransferase K/L of Stenotrophomonas maltophilia (strain R551-3).